Consider the following 194-residue polypeptide: MKGNWSIVRKVLHRQFSTLRSSTPSSRLSTSIRPLVLAPNSISSLIARNSLFTASNIGPSIDFNFSNTSLPHRRSLCSEAGGENGVVLVKSEEEFINAMSKAQDGSLPSVFYFTAAWCGPCRFISPVIVELSKQYPDVTTYKVDIDEGGISNTISKLNITAVPTLHFFKGGSKKGEVVGADVTKLKNLMEQLYK.

A mitochondrion-targeting transit peptide spans 1–42; that stretch reads MKGNWSIVRKVLHRQFSTLRSSTPSSRLSTSIRPLVLAPNSI. Residue Ser75 is modified to Phosphoserine. In terms of domain architecture, Thioredoxin spans 89 to 194; that stretch reads VKSEEEFINA…LKNLMEQLYK (106 aa). Residues Cys118 and Cys121 each act as nucleophile in the active site. Cysteines 118 and 121 form a disulfide.

The protein belongs to the thioredoxin family. Plant O-type subfamily.

The protein resides in the mitochondrion matrix. Functionally, thiol-disulfide oxidoreductase that may participate in various redox reactions. Possesses insulin disulfide bonds reducing activity. Reduced by thioredoxin reductases NTRA and NTRB. The sequence is that of Thioredoxin O1, mitochondrial from Arabidopsis thaliana (Mouse-ear cress).